Here is a 1782-residue protein sequence, read N- to C-terminus: A-kinase anchor protein 12 (1782 aa).

Disordered regions lie at residues 1–53 (MGAG…DPAT), 71–169 (QDEL…QAND), 189–400 (KTEK…APLA), 421–886 (VSTV…ELSE), 938–1089 (EREV…LKKE), 1105–1134 (PFTQ…ESSE), 1157–1274 (AIPP…ADEK), and 1305–1355 (KGEG…HVNE). G2 carries N-myristoyl glycine lipidation. Residues S11, S19, S28, S75, and S96 each carry the phosphoserine modification. Residues 16 to 53 (PEGSSTPAEPEPSGGGPSAEAAPDTTADPAIAASDPAT) are compositionally biased toward low complexity. Over residues 108–125 (GQRDSEDVSKRDSDKEMA) the composition is skewed to basic and acidic residues. The span at 145–154 (IIEQIPSSES) shows a compositional bias: low complexity. S154 is subject to Phosphoserine. Positions 157 to 168 (EELTQPTESQAN) are enriched in polar residues. Residues S219, S248, S258, S280, S283, S286, S347, and S371 each carry the phosphoserine modification. Residues 226–249 (ASKESEPKQSTEKPEETLKREQSH) show a composition bias toward basic and acidic residues. Positions 266 to 557 (KEEGEEKQEK…TQVPADSPDS (292 aa)) are involved in PKC-binding. 2 stretches are compositionally biased toward basic and acidic residues: residues 315 to 347 (KPKE…EVAS) and 363 to 379 (ESAH…KVEL). Phosphotyrosine is present on Y374. A phosphoserine mark is found at S381 and S392. Positions 423–435 (TVEERTEEQKTEV) are enriched in basic and acidic residues. Over residues 446 to 456 (ELVEMDAEPQE) the composition is skewed to acidic residues. Over residues 458-468 (EPAKELVKLKE) the composition is skewed to basic and acidic residues. Residues S483 and S505 each carry the phosphoserine modification. Over residues 528–537 (LSGKKQKGKR) the composition is skewed to basic residues. Residues S554, S557, S598, S612, S627, and S629 each carry the phosphoserine modification. The AKAP CaM-binding 1 signature appears at 607–627 (VTPWASFKKMVTPKKRVRRPS). The span at 625–639 (RPSESDKEDELDKVK) shows a compositional bias: basic and acidic residues. Low complexity predominate over residues 640 to 652 (SATLSSTESTASE). T642 bears the Phosphothreonine mark. Residues S644, S645, S648, and S651 each carry the phosphoserine modification. Basic and acidic residues predominate over residues 655-674 (EEMKGSVEEPKPEEPKRKVD). 3 positions are modified to phosphoserine: S696, S697, and S698. The span at 708 to 724 (GGDHQKADEAGKDKETG) shows a compositional bias: basic and acidic residues. Residues 739–749 (QGSSSPEQAGS) are compositionally biased toward polar residues. Phosphoserine is present on residues S749, S761, and S787. An AKAP CaM-binding 2 motif is present at residues 756 to 776 (VSTWESFKRLVTPRKKSKSKL). A compositionally biased stretch (basic and acidic residues) spans 792–803 (STPDTEPGKEES). Residues 801-821 (EESWVSIKKFIPGRRKKRPDG) carry the AKAP CaM-binding 3 motif. S806 carries the phosphoserine modification. Residues 986 to 997 (GAEEGTEASAAE) are compositionally biased toward low complexity. K1051 participates in a covalent cross-link: Glycyl lysine isopeptide (Lys-Gly) (interchain with G-Cter in SUMO1). A compositionally biased stretch (basic and acidic residues) spans 1072 to 1089 (AEAERPEEQAEASGLKKE). Residues 1164–1174 (ETPTDSETDGS) show a composition bias toward polar residues. Basic and acidic residues-rich tracts occupy residues 1187–1198 (QKDEIVEIHEEN) and 1231–1251 (EETK…KEVS). The span at 1253–1267 (ETVSILSKTEGTQEA) shows a compositional bias: polar residues. 2 positions are modified to phosphoserine: S1328 and S1331. A compositionally biased stretch (basic and acidic residues) spans 1333-1355 (VEREMVVQVEREKTEAEPTHVNE). Phosphoserine is present on residues S1391 and S1395. An RII-binding region spans residues 1541 to 1554 (ELETKSSKLVQNII). Positions 1584-1782 (KADSQDAGQE…ESAKSELTES (199 aa)) are disordered. S1587 carries the post-translational modification Phosphoserine. A compositionally biased stretch (polar residues) spans 1603–1612 (ASAQDETPIT). Composition is skewed to basic and acidic residues over residues 1629–1639 (DISKDMSEASE) and 1675–1699 (VPED…KEDE). S1727 is subject to Phosphoserine. Composition is skewed to basic and acidic residues over residues 1734–1757 (KQKE…ESDK) and 1766–1782 (ELQK…LTES).

Binds to dimeric RII-alpha regulatory subunit of PKC. Expressed in endothelial cells, cultured fibroblasts and osteosarcoma, but not in platelets, leukocytes, monocytic cell lines or peripherical blood cells.

The protein resides in the cytoplasm. It is found in the cell cortex. The protein localises to the cytoskeleton. It localises to the membrane. Functionally, anchoring protein that mediates the subcellular compartmentation of protein kinase A (PKA) and protein kinase C (PKC). The chain is A-kinase anchor protein 12 (AKAP12) from Homo sapiens (Human).